The following is a 163-amino-acid chain: Transcriptional repressor NrdR (163 aa).

The segment at 1-22 (MRCPKCQSLKSSVIDSRQAEDG) is disordered. Residues 3–34 (CPKCQSLKSSVIDSRQAEDGNTIRRRRSCDQC) fold into a zinc finger. The ATP-cone domain occupies 49-139 (LVVVKKDGTR…VYRSFKDVGE (91 aa)).

This sequence belongs to the NrdR family. Zn(2+) is required as a cofactor.

Functionally, negatively regulates transcription of bacterial ribonucleotide reductase nrd genes and operons by binding to NrdR-boxes. This chain is Transcriptional repressor NrdR, found in Streptococcus suis (strain 98HAH33).